A 252-amino-acid chain; its full sequence is Probable phosphatase SO_1652 (252 aa).

9 residues coordinate Zn(2+): His8, His10, His16, His41, Glu74, His102, His132, Asp193, and His195.

It belongs to the PHP family. Zn(2+) is required as a cofactor.

This chain is Probable phosphatase SO_1652, found in Shewanella oneidensis (strain ATCC 700550 / JCM 31522 / CIP 106686 / LMG 19005 / NCIMB 14063 / MR-1).